Reading from the N-terminus, the 1609-residue chain is Laminin subunit gamma-1 (1609 aa).

Residues 1-33 (MRGSHRAAPALRPRGRLWPVLAVLAAAAAAGCA) form the signal peptide. Residues 46–285 (RPQRCMPEFV…AISDFAVGGR (240 aa)) enclose the Laminin N-terminal domain. N60 and N134 each carry an N-linked (GlcNAc...) asparagine glycan. 16 cysteine pairs are disulfide-bonded: C286–C295, C288–C305, C307–C316, C319–C339, C342–C351, C344–C367, C370–C379, C382–C395, C398–C410, C400–C416, C418–C427, C430–C442, C445–C456, C447–C463, C465–C474, and C477–C492. Laminin EGF-like domains are found at residues 286-341 (CKCN…ECLP), 342-397 (CDCN…ACSS), 398-444 (CHCS…GCRP), and 445-494 (CSCD…GCTP). A Laminin EGF-like 5; first part domain is found at 495–504 (CFCFGHSSVC). Positions 514–689 (SISSTFQIDE…PGVPATWVES (176 aa)) constitute a Laminin IV type A domain. N576 and N650 each carry an N-linked (GlcNAc...) asparagine glycan. The Laminin EGF-like 5; second part domain maps to 690-723 (CTCPVGYGGQFCEMCLSGYRRETPNLGPYSPCVL). Cystine bridges form between C724/C733, C726/C740, C742/C751, C754/C770, C773/C781, C775/C792, C795/C804, C807/C825, C828/C842, C830/C849, C852/C861, C864/C881, C884/C898, C886/C905, C907/C916, C919/C932, C935/C947, C937/C954, C956/C965, C968/C980, C983/C995, C985/C1001, C1003/C1012, and C1015/C1028. Laminin EGF-like domains follow at residues 724–772 (CACN…DCQP), 773–827 (CPCP…LCRL), 828–883 (CQCS…KCKA), 884–934 (CNCN…GCER), 935–982 (CDCH…GCKP), and 983–1030 (CDCH…GCQE). N-linked (GlcNAc...) asparagine glycans are attached at residues N1022 and N1107. The tract at residues 1030–1609 (ECPACYRLVK…CFNTPSIEKP (580 aa)) is domain II and I. Positions 1038 to 1609 (VKDKVADHRV…CFNTPSIEKP (572 aa)) form a coiled coil. S1149 carries the phosphoserine; by FAM20C modification. Residues N1161, N1175, N1205, N1223, N1241, N1380, N1395, and N1439 are each glycosylated (N-linked (GlcNAc...) asparagine). S1493 is subject to Phosphoserine.

Laminin is a complex glycoprotein, consisting of three different polypeptide chains (alpha, beta, gamma), which are bound to each other by disulfide bonds into a cross-shaped molecule comprising one long and three short arms with globules at each end. Gamma-1 is a subunit of laminin-1 (laminin-111 or EHS laminin), laminin-2 (laminin-211 or merosin), laminin-3 (laminin-121 or S-laminin), laminin-4 (laminin-221 or S-merosin), laminin-6 (laminin-311 or K-laminin), laminin-7 (laminin-321 or KS-laminin), laminin-8 (laminin-411), laminin-9 (laminin-421), laminin-10 (laminin-511) and laminin-11 (laminin-521). Interacts with SVEP1. As to expression, found in the basement membranes (major component).

The protein resides in the secreted. The protein localises to the extracellular space. Its subcellular location is the extracellular matrix. It is found in the basement membrane. Its function is as follows. Binding to cells via a high affinity receptor, laminin is thought to mediate the attachment, migration and organization of cells into tissues during embryonic development by interacting with other extracellular matrix components. The protein is Laminin subunit gamma-1 of Homo sapiens (Human).